The chain runs to 103 residues: Putative membrane protein insertion efficiency factor (103 aa).

This sequence belongs to the UPF0161 family.

The protein localises to the cell membrane. In terms of biological role, could be involved in insertion of integral membrane proteins into the membrane. In Clavibacter sepedonicus (Clavibacter michiganensis subsp. sepedonicus), this protein is Putative membrane protein insertion efficiency factor.